A 415-amino-acid polypeptide reads, in one-letter code: Intron-encoded DNA endonuclease aI3 (415 aa).

Residues M1 to N81 form a COX1 exons 1 to 3 encoded region. 2 helical membrane-spanning segments follow: residues V16 to I36 and V57 to G77. The tract at residues Q82–K415 is COX1 intron 3 encoded.

In the C-terminal section; belongs to the LAGLIDADG endonuclease family. Mg(2+) serves as cofactor. Post-translationally, the mature protein may arise from proteolytic cleavage of an in-frame translation of some COX1 exons plus the intron containing the aI3 open reading frame.

It is found in the mitochondrion. The protein localises to the membrane. In terms of biological role, mitochondrial DNA endonuclease involved in intron homing. It introduces a specific double-strand break in the DNA of the COX1 gene and thus mediates the insertion of an intron, containing its own coding sequence (group I intron), into an intronless gene. Recognizes with high specificity and cleaves the sequence 5'-GGTTTTGGTAACTATTTATTAC-3'. This Saccharomyces cerevisiae (strain ATCC 204508 / S288c) (Baker's yeast) protein is Intron-encoded DNA endonuclease aI3 (AI3).